The following is a 59-amino-acid chain: UPF0181 protein YoaH (59 aa).

This sequence belongs to the UPF0181 family.

The protein is UPF0181 protein YoaH of Shigella flexneri.